Consider the following 496-residue polypeptide: Apolipoprotein N-acyltransferase (496 aa).

Helical transmembrane passes span 23–43 (GIAT…FILW), 50–70 (LANF…LYEL), 84–104 (LIIS…LVYL), 126–146 (LTIK…ILSQ), 171–191 (WIGA…IYLI), and 205–225 (FLFG…TNPI). The region spanning 236–464 (WQTNMPTREK…NDVVNPNFSI (229 aa)) is the CN hydrolase domain. The Proton acceptor role is filled by Glu-276. Lys-325 is a catalytic residue. Catalysis depends on Cys-374, which acts as the Nucleophile. The chain crosses the membrane as a helical span at residues 476 to 496 (PLFLLCLFLIGLNLYFGKFTN).

The protein belongs to the CN hydrolase family. Apolipoprotein N-acyltransferase subfamily.

The protein resides in the cell inner membrane. It carries out the reaction N-terminal S-1,2-diacyl-sn-glyceryl-L-cysteinyl-[lipoprotein] + a glycerophospholipid = N-acyl-S-1,2-diacyl-sn-glyceryl-L-cysteinyl-[lipoprotein] + a 2-acyl-sn-glycero-3-phospholipid + H(+). Its pathway is protein modification; lipoprotein biosynthesis (N-acyl transfer). Its function is as follows. Catalyzes the phospholipid dependent N-acylation of the N-terminal cysteine of apolipoprotein, the last step in lipoprotein maturation. This chain is Apolipoprotein N-acyltransferase, found in Prochlorococcus marinus subsp. pastoris (strain CCMP1986 / NIES-2087 / MED4).